Reading from the N-terminus, the 180-residue chain is Large ribosomal subunit protein uL6 (180 aa).

It belongs to the universal ribosomal protein uL6 family. In terms of assembly, part of the 50S ribosomal subunit.

Its function is as follows. This protein binds to the 23S rRNA, and is important in its secondary structure. It is located near the subunit interface in the base of the L7/L12 stalk, and near the tRNA binding site of the peptidyltransferase center. This Thermus aquaticus protein is Large ribosomal subunit protein uL6.